We begin with the raw amino-acid sequence, 340 residues long: L-threonine 3-dehydrogenase (340 aa).

Position 38 (cysteine 38) interacts with Zn(2+). Active-site charge relay system residues include threonine 40 and histidine 43. The Zn(2+) site is built by histidine 63, glutamate 64, cysteine 93, cysteine 96, cysteine 99, and cysteine 107. Residues isoleucine 175, aspartate 195, arginine 200, 262 to 264 (LGI), and 286 to 287 (IY) contribute to the NAD(+) site.

The protein belongs to the zinc-containing alcohol dehydrogenase family. In terms of assembly, homotetramer. It depends on Zn(2+) as a cofactor.

Its subcellular location is the cytoplasm. It catalyses the reaction L-threonine + NAD(+) = (2S)-2-amino-3-oxobutanoate + NADH + H(+). Its pathway is amino-acid degradation; L-threonine degradation via oxydo-reductase pathway; glycine from L-threonine: step 1/2. Catalyzes the NAD(+)-dependent oxidation of L-threonine to 2-amino-3-ketobutyrate. In Legionella pneumophila (strain Corby), this protein is L-threonine 3-dehydrogenase.